The chain runs to 1074 residues: ADAMTS-like protein 4 (1074 aa).

A signal peptide spans 1–24 (MENWTGRPWLYLLLLLSLPQLCLD). Residues 48–93 (GPWVQWASCSQPCGVGVQRRSRTCQLPTVQLHPSLPLPPRPPRHPE) enclose the TSP type-1 1 domain. The segment at 77–342 (QLHPSLPLPP…QHPGAWLPLL (266 aa)) is disordered. A compositionally biased stretch (polar residues) spans 103–119 (RPQTSPETLPLYRTQSR). A compositionally biased stretch (basic and acidic residues) spans 132 to 152 (LGREETQEIRAARRSRLRDPI). Residues 206 to 226 (ANGSPQTELPPTELSVHTPSP) are compositionally biased toward polar residues. Residues 310–323 (GQQGQGPWGTGGTP) are compositionally biased toward gly residues. A glycan (N-linked (GlcNAc...) (complex) asparagine) is linked at Asn-490. TSP type-1 domains follow at residues 723–782 (CPPY…QLRL), 783–842 (CGHW…GPCT), 845–909 (WFHS…GPCE), 910–969 (RTWR…QGQA), and 970–1026 (CQDR…QPCS). Asn-773 carries N-linked (GlcNAc...) asparagine glycosylation. The PLAC domain occupies 1029 to 1066 (PDDQCKDSSPHCPLVVQARLCVYPYYTATCCRSCAHVL).

Interacts with CTSB. Interacts with FBN1. N-glycosylated. Can be O-fucosylated by POFUT2 on a serine or a threonine residue found within the consensus sequence C1-X(2)-(S/T)-C2-G of the TSP type-1 repeat domains where C1 and C2 are the first and second cysteine residue of the repeat, respectively. Fucosylated repeats can then be further glycosylated by the addition of a beta-1,3-glucose residue by the glucosyltransferase, B3GALTL. Fucosylation mediates the efficient secretion of ADAMTS family members. Can also be C-glycosylated with one or two mannose molecules on tryptophan residues within the consensus sequence W-X-X-W of the TPRs. N- and C-glycosylations can also facilitate secretion. Expressed in colon, heart, leukocyte, liver, lung, skeletal muscle, spleen, testis and placenta. Weaker expression in bone marrow, brain tissue, kidney and pancreas. Expression studies in fetal tissues reveal strong expression in heart, kidney, liver, lung and skeletal muscle, but weaker expression in fetal brain and skin.

Its subcellular location is the secreted. The protein localises to the extracellular space. It localises to the extracellular matrix. Its function is as follows. Positive regulation of apoptosis. May facilitate FBN1 microfibril biogenesis. In Homo sapiens (Human), this protein is ADAMTS-like protein 4 (ADAMTSL4).